A 383-amino-acid polypeptide reads, in one-letter code: Lipid-A-disaccharide synthase (383 aa).

It belongs to the LpxB family.

The enzyme catalyses a lipid X + a UDP-2-N,3-O-bis[(3R)-3-hydroxyacyl]-alpha-D-glucosamine = a lipid A disaccharide + UDP + H(+). It participates in bacterial outer membrane biogenesis; LPS lipid A biosynthesis. In terms of biological role, condensation of UDP-2,3-diacylglucosamine and 2,3-diacylglucosamine-1-phosphate to form lipid A disaccharide, a precursor of lipid A, a phosphorylated glycolipid that anchors the lipopolysaccharide to the outer membrane of the cell. The sequence is that of Lipid-A-disaccharide synthase from Myxococcus xanthus (strain DK1622).